A 162-amino-acid chain; its full sequence is Class I hydrophobin dewC (162 aa).

Positions 1–21 (MQFTIASLIATAVLGLQMASA) are cleaved as a signal peptide. 4 disulfides stabilise this stretch: Cys43–Cys119, Cys50–Cys113, Cys51–Cys90, and Cys120–Cys156.

It belongs to the fungal hydrophobin family. Self-assembles to form functional amyloid fibrils called rodlets. Self-assembly into fibrillar rodlets occurs spontaneously at hydrophobic:hydrophilic interfaces and the rodlets further associate laterally to form amphipathic monolayers.

The protein localises to the secreted. Its subcellular location is the spore wall. In terms of biological role, aerial growth, conidiation, and dispersal of filamentous fungi in the environment rely upon a capability of their secreting small amphipathic proteins called hydrophobins (HPBs) with low sequence identity. Class I can self-assemble into an outermost layer of rodlet bundles on aerial cell surfaces, conferring cellular hydrophobicity that supports fungal growth, development and dispersal; whereas Class II form highly ordered films at water-air interfaces through intermolecular interactions but contribute nothing to the rodlet structure. DewC is a class I hydrophobin that contributes to the hydrophobicity of the spore surface. The chain is Class I hydrophobin dewC from Emericella nidulans (strain FGSC A4 / ATCC 38163 / CBS 112.46 / NRRL 194 / M139) (Aspergillus nidulans).